Consider the following 141-residue polypeptide: Vesicle-associated membrane protein 4 (141 aa).

The disordered stretch occupies residues 1 to 51 (MPPKFKRHLNDDDVTGSVKSERRNLLEDDSDEEEDFFLRGPSGPRFGPRND). Residues 1 to 115 (MPPKFKRHLN…RRQMWWRGCK (115 aa)) are Cytoplasmic-facing. Residues Ser17 and Ser30 each carry the phosphoserine modification. The region spanning 52-112 (KIKHVQNQVD…KQLRRQMWWR (61 aa)) is the v-SNARE coiled-coil homology domain. Residues 116-136 (IKAIMALVAVILLLVIIILIV) traverse the membrane as a helical; Anchor for type IV membrane protein segment. Residues 137–141 (VKYRT) are Vesicular-facing.

This sequence belongs to the synaptobrevin family. As to quaternary structure, identified in a complex containing STX6, STX12, VAMP4 and VTI1A. Interacts with BAIAP3; this interaction is increased in the presence of calcium.

It is found in the golgi apparatus. Its subcellular location is the trans-Golgi network membrane. Its function is as follows. Involved in the pathway that functions to remove an inhibitor (probably synaptotagmin-4) of calcium-triggered exocytosis during the maturation of secretory granules. May be a marker for this sorting pathway that is critical for remodeling the secretory response of granule. This chain is Vesicle-associated membrane protein 4 (VAMP4), found in Bos taurus (Bovine).